A 249-amino-acid polypeptide reads, in one-letter code: Probable transcriptional regulatory protein MXAN_4974 (249 aa).

The protein belongs to the TACO1 family.

It is found in the cytoplasm. The sequence is that of Probable transcriptional regulatory protein MXAN_4974 from Myxococcus xanthus (strain DK1622).